The following is a 181-amino-acid chain: Lectin beta-1 and beta-2 chains (181 aa).

2 residues coordinate Mn(2+): Glu-119 and Asp-121. Ca(2+) is bound by residues Asp-121, Phe-123, Asn-125, and Asp-129. Positions 129 and 136 each coordinate Mn(2+).

Belongs to the leguminous lectin family. Tetramer of two alpha and two beta chains.

This is Lectin beta-1 and beta-2 chains from Lathyrus ochrus (Cyprus-vetch).